The following is a 144-amino-acid chain: uncharacterized protein (144 aa).

A run of 4 helical transmembrane segments spans residues 7-29 (FPAS…RDLV), 51-73 (VAIG…FLLV), 85-107 (AVLA…VGAF), and 122-139 (HLHH…LIFV).

Its subcellular location is the cell membrane. This is an uncharacterized protein from Treponema pallidum (strain Nichols).